Reading from the N-terminus, the 265-residue chain is MVSRPRSPSAFPAPWWGQQPGGPGPAKRLRLEEPAGPEPRAAPSLEDPAGDPAVDALTSIVVLAAGCALRVPLDDVDLVLEPAPTSILRVSLGGHTLILIPEVLLSSVDERSGAQHDSSAGLEVDVFLGAVREDVVVELEFCASVPEIAAQEEAYEEDADPEFPELRMDSPTGSAAGLYPSSRSMFIPYREGPIPEPCALAPNPSSERRSPRPIFDLEFRLLEPVPSSPLQPLPPSPCVGSPGPHARSPLPERPPCKARRRLFQA.

Over residues methionine 1–glutamine 18 the composition is skewed to low complexity. 2 disordered regions span residues methionine 1 to alanine 49 and proline 226 to alanine 265. A compositionally biased stretch (pro residues) spans proline 226 to proline 237. Over residues cysteine 256–alanine 265 the composition is skewed to basic residues.

It belongs to the PRR23 family.

The sequence is that of Proline-rich protein 23B (PRR23B) from Homo sapiens (Human).